Reading from the N-terminus, the 453-residue chain is MREGSHVIVLPFPAQGHITPMSQFCKRLASKSLKITLVLVSDKPSPPYKTEHDTITVVPISNGFQEGQERSEDLDEYMERVESSIKNRLPKLIEDMKLSGNPPRALVYDSTMPWLLDVAHSYGLSGAVFFTQPWLVSAIYYHVFKGSFSVPSTKYGHSTLASFPSLPILNANDLPSFLCESSSYPYILRTVIDQLSNIDRVDIVLCNTFDKLEEKLLKWIKSVWPVLNIGPTVPSMYLDKRLAEDKNYGFSLFGAKIAECMEWLNSKQPSSVVYVSFGSLVVLKKDQLIELAAGLKQSGHFFLWVVRETERRKLPENYIEEIGEKGLTVSWSPQLEVLTHKSIGCFVTHCGWNSTLEGLSLGVPMIGMPHWADQPTNAKFMEDVWKVGVRVKADSDGFVRREEFVRRVEEVMEAEQGKEIRKNAEKWKVLAQEAVSEGGSSDKNINEFVSMFC.

UDP-alpha-D-glucose-binding positions include Ser-279, 332–334 (SPQ), 349–357 (HCGWNSTLE), and 371–374 (WADQ).

The protein belongs to the UDP-glycosyltransferase family.

The chain is UDP-glycosyltransferase 74E1 (UGT74E1) from Arabidopsis thaliana (Mouse-ear cress).